Here is a 2547-residue protein sequence, read N- to C-terminus: Lovastatin diketide synthase mokB (2547 aa).

Residues 10–430 (PTPIAVVGMG…GANAHAIVER (421 aa)) enclose the Ketosynthase family 3 (KS3) domain. Catalysis depends on for beta-ketoacyl synthase activity residues Cys183, His318, and His353. An acyl and malonyl transferase region spans residues 545–890 (VFTGQGAQWF…MDLLQGGYPV (346 aa)). The For malonyltransferase activity role is filled by Ser635. The N-terminal hotdog fold stretch occupies residues 941–1079 (HDLIGVQEPL…GLIRAQVDHP (139 aa)). A PKS/mFAS DH domain is found at 941 to 1252 (HDLIGVQEPL…FQSLGAVISD (312 aa)). Residue His973 is the Proton acceptor; for dehydratase activity of the active site. A dehydratase-like region spans residues 973 to 985 (HVVGSRILFPGAG). Positions 1095–1252 (SRKMAPQDLW…FQSLGAVISD (158 aa)) are C-terminal hotdog fold. Residue Asp1160 is the Proton donor; for dehydratase activity of the active site. Cys1340 and Cys1379 are joined by a disulfide. A methyltransferase region spans residues 1510-1547 (YDVVLACQVLHATSNMQRTLNNVRKLLKPGGKLILVET). Residues 2459–2541 (ASTEEEATAL…EVAEVVVKKY (83 aa)) enclose the Carrier domain. Ser2501 carries the O-(pantetheine 4'-phosphoryl)serine modification.

The cofactor is pantetheine 4'-phosphate.

It carries out the reaction holo-[2-methylbutanoate polyketide synthase] + 2 malonyl-CoA + S-adenosyl-L-methionine + 2 NADPH + 3 H(+) = (S)-2-methylbutanoyl-[2-methylbutanoate polyketide synthase] + S-adenosyl-L-homocysteine + 2 CO2 + 2 NADP(+) + 2 CoA + H2O. The protein operates within polyketide biosynthesis; lovastatin biosynthesis. Its function is as follows. Diketide synthase; part of the gene cluster that mediates the biosynthesis of monakolin K, also known as lovastatin, and which acts as a potent competitive inhibitor of HMG-CoA reductase. Monakolin K biosynthesis is performed in two stages. The first stage is catalyzed by the nonaketide synthase mokA, which belongs to type I polyketide synthases and catalyzes the iterative nine-step formation of the polyketide. This PKS stage completed by the action of dehydrogenase mokE, which catalyzes the NADPH-dependent reduction of the unsaturated tetra-, penta- and heptaketide intermediates that arise during the mokA-mediated biosynthesis of the nonaketide chain and leads to dihydromonacolin L. Covalently bound dihydromonacolin L is released from mokA by the mokD esterase. Conversion of dihydromonacolin L into monacolin L and then monacolin J is subsequently performed with the participation of molecular oxygen and P450 monoogygenase mokC. Finally, mokF performs the conversion of monacoline J to monacoline K through the addition of the side-chain diketide moiety (2R)-2-methylbutanoate produced by the diketide synthase mokB. In Monascus pilosus (Red mold), this protein is Lovastatin diketide synthase mokB.